A 249-amino-acid polypeptide reads, in one-letter code: Tetraspanin-7 (249 aa).

Topologically, residues 1–16 (MASRRMETKPVITCLK) are cytoplasmic. A helical membrane pass occupies residues 17–40 (TLLIIYSFVFWITGVILLAVGVWG). The Extracellular portion of the chain corresponds to 41 to 56 (KLTLGTYISLIAENST). Asn54 carries N-linked (GlcNAc...) asparagine glycosylation. The helical transmembrane segment at 57–75 (NAPYVLIGTGTTIVVFGLF) threads the bilayer. The Cytoplasmic portion of the chain corresponds to 76 to 86 (GCFATCRGSPW). Residues 87–112 (MLKLYAMFLSLVFLAELVAGISGFVF) traverse the membrane as a helical segment. Residues 113–213 (RHEIKDTFLR…LVTSFMETNM (101 aa)) lie on the Extracellular side of the membrane. 4 N-linked (GlcNAc...) asparagine glycosylation sites follow: Asn155, Asn158, Asn177, and Asn188. Residues 214-234 (GIIAGVAFGIAFSQLIGMLLA) form a helical membrane-spanning segment. Residues 235–249 (CCLSRFITANQYEMV) lie on the Cytoplasmic side of the membrane.

This sequence belongs to the tetraspanin (TM4SF) family. In terms of assembly, (Microbial infection) Interacts with herpes simplex virus 1 (HHV-1) UL35. In terms of tissue distribution, not solely expressed in T-cells. Expressed in acute myelocytic leukemia cells of some patients.

It is found in the membrane. In terms of biological role, may be involved in cell proliferation and cell motility. The sequence is that of Tetraspanin-7 (TSPAN7) from Homo sapiens (Human).